Reading from the N-terminus, the 127-residue chain is Polyadenylate-binding protein-interacting protein 2 (127 aa).

Residues 1–13 (MKDPSRSSTSPSI) are compositionally biased toward polar residues. The tract at residues 1 to 24 (MKDPSRSSTSPSIINEDVIINGHS) is disordered. The segment at 22-75 (GHSHEDDNPFAEYMWMENEEEFNRQIEEELWEEEFIERCFQEMLEEEEEHEWFI) is PABPC1-interacting motif-1 (PAM1). Positions 105-120 (LVVKSNLNPNAKEFVP) are PABPC1-interacting motif-2 (PAM2).

The protein belongs to the PAIP2 family. Interacts with the second and third RRM domains and C-terminus regions of PABPC1 in a 2:1 stoichiometry. Post-translationally, ubiquitinated, leading to its degradation by the proteasome. As to expression, expressed at highest level in testis, but also abundant in brain, cervix, lung, ovary, placenta, adipose tissue, thymus and thyroid.

It localises to the cytoplasm. Acts as a repressor in the regulation of translation initiation of poly(A)-containing mRNAs. Its inhibitory activity on translation is mediated via its action on PABPC1. Displaces the interaction of PABPC1 with poly(A) RNA and competes with PAIP1 for binding to PABPC1. Its association with PABPC1 results in disruption of the cytoplasmic poly(A) RNP structure organization. The protein is Polyadenylate-binding protein-interacting protein 2 (PAIP2) of Homo sapiens (Human).